A 257-amino-acid polypeptide reads, in one-letter code: Very long chain fatty acid elongase F (257 aa).

The next 7 helical transmembrane spans lie at 10–30 (IPVV…LLFV), 55–75 (IFQI…LFVL), 98–118 (LICT…IFFV), 135–155 (FAMA…GVAF), 158–178 (CLLN…SSIS), 191–211 (ITIA…ITLA), and 221–241 (LTYG…QFYY).

The protein belongs to the ELO family. In terms of tissue distribution, highly expressed in females. Little or no expression detected in males.

The protein localises to the endoplasmic reticulum membrane. The catalysed reaction is a very-long-chain acyl-CoA + malonyl-CoA + H(+) = a very-long-chain 3-oxoacyl-CoA + CO2 + CoA. The protein operates within lipid metabolism; fatty acid biosynthesis. In terms of biological role, condensing enzyme that elongates saturated and monounsaturated very long chain fatty acids, to yield products up to 30 carbons in length. May also elongate diunsaturated fatty acids. Important for courtship behavior where it probably has a role in female pheromone biosynthesis. In Drosophila melanogaster (Fruit fly), this protein is Very long chain fatty acid elongase F.